A 388-amino-acid chain; its full sequence is (S)-8-oxocitronellyl enol synthase (388 aa).

NADP(+) contacts are provided by residues 38-40 (TGI), 66-67 (RR), 84-85 (DV), 108-109 (SW), and Q142. Residues K146 and Y178 contribute to the active site. Substrate is bound by residues K146 and Y178. NADP(+) is bound by residues Y178, V204, and 211–213 (SMM). Residue S349 coordinates substrate.

This sequence belongs to the short-chain dehydrogenases/reductases (SDR) family. Highly divergent. Homodimer. In terms of tissue distribution, expressed in internal phloem-associated parenchyma (IPAP) cells.

The protein localises to the cytoplasm. Its subcellular location is the cytosol. The enzyme catalyses (S)-8-oxocitronellyl enol + NADP(+) = (6E)-8-oxogeranial + NADPH + H(+). It catalyses the reaction (S)-8-oxocitronellyl enol + NAD(+) = (6E)-8-oxogeranial + NADH + H(+). In terms of biological role, iridoid synthase that catalyzes the first step in generation of the iridoid ring scaffold using the linear monoterpene (6E)-8-oxogeranial as substrate. Iridoids comprise a large family of distinctive bicyclic monoterpenes that possess a wide range of pharmacological activities, including anticancer, anti-inflammatory, antifungal and antibacterial activities. This Catharanthus roseus (Madagascar periwinkle) protein is (S)-8-oxocitronellyl enol synthase.